Reading from the N-terminus, the 639-residue chain is Centromere protein T (639 aa).

Disordered stretches follow at residues 1 to 64 (MDGR…RPNA), 266 to 294 (QLSD…GLVS), 307 to 451 (SEKD…ERGT), 458 to 477 (AAEE…ESEE), and 494 to 534 (QPVL…TREP). Residues 12–23 (RAAPTPRVAVRS) show a composition bias toward low complexity. The flexible stalk domain stretch occupies residues 80 to 500 (IIQNQPQVSP…YRPQPVLSPP (421 aa)). Residues 267 to 281 (LSDSKTSAQRSNTSY) show a composition bias toward polar residues. Composition is skewed to basic and acidic residues over residues 307–319 (SEKD…EHVD), 329–338 (QGEEEQDHSQ), 356–371 (TEHH…SEKK), and 432–449 (PGAK…EIER). Acidic residues predominate over residues 458 to 469 (AAEEEATDDESD).

Belongs to the CENP-T/CNN1 family. Component of the CENPA-CAD complex, composed of CENPI, CENPK, CENPL, CENPO, CENPP, CENPQ, CENPR and CENPS. The CENPA-CAD complex is probably recruited on centromeres by the CENPA-NAC complex, at least composed of CENPA, CENPC, CENPH, CENPM, CENPN, CENPT and CENPU. Identified in a centromeric complex containing histones H2A, H2B, H3 and H4, and at least CENPA, CENPB, CENPC, CENPT, CENPN, HJURP, SUPT16H, SSRP1 and RSF1. Interacts (via N-terminus) with the NDC80 complex. Heterodimer with CENPW; this dimer coassembles with CENPS-CENPX heterodimers at centromeres to form the tetrameric CENP-T-W-S-X complex.

Its subcellular location is the nucleus. The protein resides in the chromosome. It is found in the centromere. The protein localises to the kinetochore. Its function is as follows. Component of the CENPA-NAC (nucleosome-associated) complex, a complex that plays a central role in assembly of kinetochore proteins, mitotic progression and chromosome segregation. The CENPA-NAC complex recruits the CENPA-CAD (nucleosome distal) complex and may be involved in incorporation of newly synthesized CENPA into centromeres. Part of a nucleosome-associated complex that binds specifically to histone H3-containing nucleosomes at the centromere, as opposed to nucleosomes containing CENPA. Component of the heterotetrameric CENP-T-W-S-X complex that binds and supercoils DNA, and plays an important role in kinetochore assembly. CENPT has a fundamental role in kinetochore assembly and function. It is one of the inner kinetochore proteins, with most further proteins binding downstream. Required for normal chromosome organization and normal progress through mitosis. The polypeptide is Centromere protein T (CENPT) (Gallus gallus (Chicken)).